The following is a 528-amino-acid chain: D-3-phosphoglycerate dehydrogenase (528 aa).

NAD(+)-binding positions include 151–152 (RI), aspartate 171, 230–232 (AAR), and aspartate 256. Residue arginine 232 is part of the active site. Glutamate 261 is a catalytic residue. Histidine 279 acts as the Proton donor in catalysis. 279 to 282 (HLGA) contacts NAD(+). One can recognise an ACT domain in the interval 455–528 (NLVIRYVDQP…ANKLEVVNLS (74 aa)).

The protein belongs to the D-isomer specific 2-hydroxyacid dehydrogenase family.

The enzyme catalyses (2R)-3-phosphoglycerate + NAD(+) = 3-phosphooxypyruvate + NADH + H(+). It carries out the reaction (R)-2-hydroxyglutarate + NAD(+) = 2-oxoglutarate + NADH + H(+). It participates in amino-acid biosynthesis; L-serine biosynthesis; L-serine from 3-phospho-D-glycerate: step 1/3. In terms of biological role, catalyzes the reversible oxidation of 3-phospho-D-glycerate to 3-phosphonooxypyruvate, the first step of the phosphorylated L-serine biosynthesis pathway. Also catalyzes the reversible oxidation of 2-hydroxyglutarate to 2-oxoglutarate. The polypeptide is D-3-phosphoglycerate dehydrogenase (serA) (Mycobacterium leprae (strain TN)).